The chain runs to 965 residues: Receptor-like protein 15 (965 aa).

The signal sequence occupies residues 1–23 (MEGKVFLGHNLIWVMLLMGQLHG). Over 24–916 (YKSCIDEEKI…GVEADESIID (893 aa)) the chain is Extracellular. N-linked (GlcNAc...) asparagine glycans are attached at residues asparagine 57, asparagine 95, asparagine 109, and asparagine 145. LRR repeat units follow at residues 80-102 (EISFGGLSLKDNSLLNLSLLHPF), 103-127 (EDVRSLNLSSSRCSGLFDDVEGYKS), 131-154 (LRKLEILDLASNKFNNSIFHFLSA), 156-179 (TSLTTLFLRSNNMDGSFPAKELRD), 180-204 (LTNLELLDLSRNRFNGSIPIQELSS), 206-230 (RKLKALDLSGNEFSGSMELQGKFCT), 243-267 (LNNMQELDLSQNKLVGHLPSCLTSL), 268-290 (TGLRVLDLSSNKLTGTVPSSLGS), 292-315 (QSLEYLSLFDNDFEGSFSFGSLAN), 316-341 (LSNLMVLKLCSKSSSLQVLSESSWKP), 342-365 (KFQLSVIALRSCNMEKVPHFLLHQ), 366-389 (KDLRHVDLSDNNISGKLPSWLLAN), 391-415 (TKLKVLLLQNNLFTSFQIPKSAHNL), 417-435 (FLDVSANDFNHLFPENIGW), 437-461 (FPHLRYLNTSKNNFQENLPSSLGNM), 462-485 (NGIQYMDLSRNSFHGNLPRSFVNG), and 487-512 (YSMAILKLSHNKLSGEIFPESTNFTN). N-linked (GlcNAc...) asparagine glycosylation is present at asparagine 194. Asparagine 315 carries N-linked (GlcNAc...) asparagine glycosylation. 2 N-linked (GlcNAc...) asparagine glycosylation sites follow: asparagine 377 and asparagine 389. A glycan (N-linked (GlcNAc...) asparagine) is linked at asparagine 444. N-linked (GlcNAc...) asparagine glycosylation is present at asparagine 509. An LRR 18; degenerate repeat occupies 514–533 (LGLFMDNNLFTGKIGQGLRS). LRR repeat units lie at residues 534 to 557 (LINLELLDMSNNNLTGVIPSWIGE), 558 to 582 (LPSLTALLISDNFLKGDIPMSLFNK), 584 to 606 (SLQLLDLSANSLSGVIPPQHDSR), 608 to 627 (GVVLLLQDNKLSGTIPDTLL), 628 to 652 (ANVEILDLRNNRFSGKIPEFINIQN), 654 to 674 (SILLLRGNNFTGQIPHQLCGL), 675 to 698 (SNIQLLDLSNNRLNGTIPSCLSNT), 778 to 801 (LKLLFGMDLSENELSGEIPVEFGG), 802 to 825 (LLELRALNLSHNNLSGVIPKSISS), 827 to 850 (EKMESFDLSFNRLQGRIPSQLTEL), and 851 to 875 (TSLSVFKVSHNNLSGVIPQGRQFNT). N-linked (GlcNAc...) asparagine glycosylation is found at asparagine 546 and asparagine 581. Residues asparagine 652, asparagine 662, asparagine 688, and asparagine 697 are each glycosylated (N-linked (GlcNAc...) asparagine). Residues asparagine 809 and asparagine 814 are each glycosylated (N-linked (GlcNAc...) asparagine). 3 N-linked (GlcNAc...) asparagine glycosylation sites follow: asparagine 862, asparagine 893, and asparagine 898. Residues 917 to 937 (MVSFYLSFAAAYVTILIGILA) form a helical membrane-spanning segment. At 938 to 965 (SLSFDSPWSRFWFYKVDAFIKKVRNLLL) the chain is on the cytoplasmic side.

It belongs to the RLP family.

It localises to the cell membrane. In Arabidopsis thaliana (Mouse-ear cress), this protein is Receptor-like protein 15.